We begin with the raw amino-acid sequence, 95 residues long: Aspartyl/glutamyl-tRNA(Asn/Gln) amidotransferase subunit C (95 aa).

This sequence belongs to the GatC family. Heterotrimer of A, B and C subunits.

It catalyses the reaction L-glutamyl-tRNA(Gln) + L-glutamine + ATP + H2O = L-glutaminyl-tRNA(Gln) + L-glutamate + ADP + phosphate + H(+). The enzyme catalyses L-aspartyl-tRNA(Asn) + L-glutamine + ATP + H2O = L-asparaginyl-tRNA(Asn) + L-glutamate + ADP + phosphate + 2 H(+). Functionally, allows the formation of correctly charged Asn-tRNA(Asn) or Gln-tRNA(Gln) through the transamidation of misacylated Asp-tRNA(Asn) or Glu-tRNA(Gln) in organisms which lack either or both of asparaginyl-tRNA or glutaminyl-tRNA synthetases. The reaction takes place in the presence of glutamine and ATP through an activated phospho-Asp-tRNA(Asn) or phospho-Glu-tRNA(Gln). The polypeptide is Aspartyl/glutamyl-tRNA(Asn/Gln) amidotransferase subunit C (Methylorubrum populi (strain ATCC BAA-705 / NCIMB 13946 / BJ001) (Methylobacterium populi)).